We begin with the raw amino-acid sequence, 137 residues long: NADH-quinone oxidoreductase subunit A 1 (137 aa).

3 helical membrane passes run 14–34 (FAAF…VSAL), 66–86 (FYLV…LFAW), and 95–115 (WAGL…LVYL).

This sequence belongs to the complex I subunit 3 family. In terms of assembly, NDH-1 is composed of 13 different subunits. Subunits NuoA, H, J, K, L, M, N constitute the membrane sector of the complex.

It is found in the cell inner membrane. The enzyme catalyses a quinone + NADH + 5 H(+)(in) = a quinol + NAD(+) + 4 H(+)(out). Functionally, NDH-1 shuttles electrons from NADH, via FMN and iron-sulfur (Fe-S) centers, to quinones in the respiratory chain. The immediate electron acceptor for the enzyme in this species is believed to be ubiquinone. Couples the redox reaction to proton translocation (for every two electrons transferred, four hydrogen ions are translocated across the cytoplasmic membrane), and thus conserves the redox energy in a proton gradient. This chain is NADH-quinone oxidoreductase subunit A 1, found in Pseudomonas paraeruginosa (strain DSM 24068 / PA7) (Pseudomonas aeruginosa (strain PA7)).